The sequence spans 70 residues: Movement protein TGBp3 (70 aa).

Topologically, residues 1–4 (MEAG) are lumenal. The chain crosses the membrane as a helical span at residues 5–27 (AYLNAIIFVLVATIIAVISRGLT). At 28-70 (RTEPCTIRITGESITVHACHIDSETIKALANLKPLSLERLSFQ) the chain is on the cytoplasmic side.

Belongs to the Tymovirales TGBp3 protein family.

It localises to the host endoplasmic reticulum membrane. In terms of biological role, plays a role in viral cell-to-cell propagation, by facilitating genome transport to neighboring plant cells through plasmosdesmata. May induce the formation of granular vesicles derived from the Endoplasmic reticulum, which align on actin filaments. The polypeptide is Movement protein TGBp3 (Potato virus X (strain CP) (PVX)).